The chain runs to 212 residues: RNA chaperone ProQ (212 aa).

Residues 107–153 are disordered; the sequence is QDKAKAKRVAQAKSANPAAKTAKKPVKKPVAKRPKPAQSSKPAKEPV. Low complexity predominate over residues 117-126; that stretch reads QAKSANPAAK. Basic residues predominate over residues 127-141; sequence TAKKPVKKPVAKRPK.

It belongs to the ProQ family.

Its subcellular location is the cytoplasm. Functionally, RNA chaperone with significant RNA binding, RNA strand exchange and RNA duplexing activities. The sequence is that of RNA chaperone ProQ from Shewanella pealeana (strain ATCC 700345 / ANG-SQ1).